The following is a 115-amino-acid chain: HTH-type transcriptional regulator SarR (115 aa).

Positions 51 to 74 (SKEIAKCSEFKPYYLTKALQKLKD) form a DNA-binding region, H-T-H motif.

It belongs to the SarA family. Homodimer.

The protein localises to the cytoplasm. In terms of biological role, negative regulator of sarA transcription at late exponential and stationary growth phases. It contributes to the modulation of target genes downstream of the sarA regulatory cascade. Also, positively regulates expression of primary transcripts RNAII and RNAIII generated by agr (virulence accessory gene regulator) locus. The chain is HTH-type transcriptional regulator SarR (sarR) from Staphylococcus aureus (strain NCTC 8325 / PS 47).